Reading from the N-terminus, the 179-residue chain is Lebocin-1/2 (179 aa).

Residues 1–16 (MYKFLVFSSVLVLFFA) form the signal peptide. Residues 17-120 (QASCQRFIQP…QPIESHRNTR (104 aa)) constitute a propeptide that is removed on maturation. Positions 93–116 (NNEASIEHSHHTVDTGLDQPIESH) are disordered. The O-linked (GalNAc...) threonine glycan is linked to Thr135. Positions 153–179 (RRHASDDQEELRQYNEHFLIPRDIFQE) are excised as a propeptide.

It belongs to the lebocin family. In terms of processing, O-glycosylation is important for the antibacterial activity of lebocin, O-linked glycan structure is a disaccharide (Gal-GalNAc) in case of lebocin 1 and a monosaccharide (GalNAc) in case of lebocin 2. As to expression, hemolymph. Produced in fat body.

The protein resides in the secreted. Antibacterial peptide. The protein is Lebocin-1/2 of Bombyx mori (Silk moth).